Reading from the N-terminus, the 298-residue chain is Bifunctional protein FolD (298 aa).

NADP(+)-binding positions include 167–169, serine 192, and valine 233; that span reads GRS.

The protein belongs to the tetrahydrofolate dehydrogenase/cyclohydrolase family. As to quaternary structure, homodimer.

It catalyses the reaction (6R)-5,10-methylene-5,6,7,8-tetrahydrofolate + NADP(+) = (6R)-5,10-methenyltetrahydrofolate + NADPH. It carries out the reaction (6R)-5,10-methenyltetrahydrofolate + H2O = (6R)-10-formyltetrahydrofolate + H(+). It functions in the pathway one-carbon metabolism; tetrahydrofolate interconversion. Its function is as follows. Catalyzes the oxidation of 5,10-methylenetetrahydrofolate to 5,10-methenyltetrahydrofolate and then the hydrolysis of 5,10-methenyltetrahydrofolate to 10-formyltetrahydrofolate. This is Bifunctional protein FolD from Chelativorans sp. (strain BNC1).